Here is a 409-residue protein sequence, read N- to C-terminus: Broad specificity amino-acid racemase (409 aa).

An N-terminal signal peptide occupies residues 1 to 24 (MPFRRTLLAASLVLLITGQAPLYA). An intrachain disulfide couples cysteine 71 to cysteine 97. Lysine 75 serves as the catalytic Proton acceptor. Lysine 75 carries the post-translational modification N6-(pyridoxal phosphate)lysine. Arginine 174 serves as a coordination point for substrate. Tyrosine 301 serves as the catalytic Proton acceptor. Position 349 (methionine 349) interacts with substrate.

The protein belongs to the alanine racemase family. Bsr subfamily. Monomer. Forms a head-to-tail homodimer in the structure. The cofactor is pyridoxal 5'-phosphate.

The protein resides in the periplasm. The catalysed reaction is an L-alpha-amino acid = a D-alpha-amino acid. The enzyme catalyses L-lysine = D-lysine. It carries out the reaction L-arginine = D-arginine. It catalyses the reaction L-alanine = D-alanine. With respect to regulation, activity is enhanced by Co(2+), Mn(2+) and Sr(2+), and decreased by Cu(2+). Functionally, amino-acid racemase that catalyzes the interconversion of L-lysine and D-lysine, and L-arginine and D-arginine. To a lesser extent, is also able to interconvert alanine and isoleucine enantiomers. In Pseudomonas putida (Arthrobacter siderocapsulatus), this protein is Broad specificity amino-acid racemase.